A 315-amino-acid polypeptide reads, in one-letter code: Zinc metalloproteinase nas-4 (315 aa).

The signal sequence occupies residues 1–20; the sequence is MMTIQRYSLVFCAIFATCWT. Residue Asn-71 is glycosylated (N-linked (GlcNAc...) asparagine). Residues 95–290 enclose the Peptidase M12A domain; that stretch reads NAIKQIYRRW…RKINKLYNCP (196 aa). 2 cysteine pairs are disulfide-bonded: Cys-137–Cys-289 and Cys-160–Cys-179. Position 187 (His-187) interacts with Zn(2+). Glu-188 is a catalytic residue. Residues His-191 and His-197 each contribute to the Zn(2+) site. The disordered stretch occupies residues 291–315; the sequence is GVSGNNNNNNNNQINSNSIVNHPQV.

Zn(2+) serves as cofactor. In terms of tissue distribution, digestive tract. Found in the pharynx cells of the procorpus, metacorpus, isthmus and terminal bulb, and in the terminal bulb lumen.

It localises to the secreted. Functionally, metalloprotease. May be involved in digestion. In Caenorhabditis elegans, this protein is Zinc metalloproteinase nas-4 (nas-4).